The chain runs to 487 residues: uncharacterized protein (487 aa).

2 ABC transporter domains span residues 5-249 (VKFA…IPVK) and 265-487 (ISME…VIHA). Position 297-304 (297-304 (GSNGSGKT)) interacts with ATP.

The protein belongs to the ABC transporter superfamily.

Its subcellular location is the mitochondrion. This is an uncharacterized protein from Schizosaccharomyces pombe (strain 972 / ATCC 24843) (Fission yeast).